The following is a 342-amino-acid chain: Phenylalanine--tRNA ligase alpha subunit (342 aa).

Glutamate 257 contacts Mg(2+).

This sequence belongs to the class-II aminoacyl-tRNA synthetase family. Phe-tRNA synthetase alpha subunit type 1 subfamily. In terms of assembly, tetramer of two alpha and two beta subunits. Mg(2+) is required as a cofactor.

It is found in the cytoplasm. The enzyme catalyses tRNA(Phe) + L-phenylalanine + ATP = L-phenylalanyl-tRNA(Phe) + AMP + diphosphate + H(+). The protein is Phenylalanine--tRNA ligase alpha subunit of Legionella pneumophila subsp. pneumophila (strain Philadelphia 1 / ATCC 33152 / DSM 7513).